The following is a 739-amino-acid chain: Catalase-peroxidase (739 aa).

The signal sequence occupies residues 1 to 23 (MLKKIVTALGMSGMLLASNSAIA). Positions 100–221 (WHDAGTYRIY…YAATQMGLIY (122 aa)) form a cross-link, tryptophyl-tyrosyl-methioninium (Trp-Tyr) (with M-247). The active-site Proton acceptor is His-101. Positions 221–247 (YVNPEGPDGKPDIKGAASEIRQAFRAM) form a cross-link, tryptophyl-tyrosyl-methioninium (Tyr-Met) (with W-100). Residue His-262 coordinates heme b.

Belongs to the peroxidase family. Peroxidase/catalase subfamily. Homodimer or homotetramer. Heme b is required as a cofactor. Formation of the three residue Trp-Tyr-Met cross-link is important for the catalase, but not the peroxidase activity of the enzyme.

It carries out the reaction H2O2 + AH2 = A + 2 H2O. The catalysed reaction is 2 H2O2 = O2 + 2 H2O. Its function is as follows. Bifunctional enzyme with both catalase and broad-spectrum peroxidase activity. In Francisella tularensis subsp. novicida (strain U112), this protein is Catalase-peroxidase.